The chain runs to 335 residues: HTH-type transcriptional regulator LacR (335 aa).

One can recognise an HTH lacI-type domain in the interval 1–58; sequence MRTIKEIALESGYSPATVSRLLNNDPNLSITADTKNKILEIANKLGYWEDHQEKKIKP. The H-T-H motif DNA-binding region spans 4–23; it reads IKEIALESGYSPATVSRLLN.

It participates in carbohydrate metabolism; lactose degradation [regulation]. Functionally, negatively regulates the transcription of the lactose utilization genes lacL and lacM. This Lactobacillus helveticus (Lactobacillus suntoryeus) protein is HTH-type transcriptional regulator LacR (lacR).